The primary structure comprises 101 residues: Citrate lyase acyl carrier protein (101 aa).

Serine 14 carries the O-(phosphoribosyl dephospho-coenzyme A)serine modification.

Belongs to the CitD family. As to quaternary structure, oligomer with a subunit composition of (alpha,beta,gamma)6.

Its subcellular location is the cytoplasm. Its function is as follows. Covalent carrier of the coenzyme of citrate lyase. In Streptococcus uberis (strain ATCC BAA-854 / 0140J), this protein is Citrate lyase acyl carrier protein.